Here is a 41-residue protein sequence, read N- to C-terminus: Large ribosomal subunit protein bL36 (41 aa).

The protein belongs to the bacterial ribosomal protein bL36 family.

The chain is Large ribosomal subunit protein bL36 from Xanthomonas axonopodis pv. citri (strain 306).